Here is a 341-residue protein sequence, read N- to C-terminus: MFKQSYQLCLVFLLFVCFYQSVKGNYGKRSKYQKHKGTIPYYSNRYHHARRQTALSRTGKSDSSPFQIILRAINRRPGPQINGRGKKSVTRTLGMLQSVLSQRRGLYNHRSQKSQNVFGVLQNLLKNVRMFKRNIGRLYVSDIVRRRIPTVNAQATARVNVQATAGVNSLTTAVNTDSQTRTLNTLRATGWFKEVSENRLIMQQVLRASLNGVIAGWIETLARRDLMEEFIDYPQAFAIITNTVLSSSQKQLILDLGGNDQLQELLENVPAFTLILNYVQTQDRVQMIVTISETGNMDKLISNLGVLNRFLSNAITPGQTAAIRNLAENGQLEQFIDNQRG.

The signal sequence occupies residues 1-24; the sequence is MFKQSYQLCLVFLLFVCFYQSVKG.

In terms of tissue distribution, component of the organic matrix of calcified shell layers like nacre and prisms.

The protein localises to the secreted. In Mytilus californianus (California mussel), this protein is Mytilin-2.